A 262-amino-acid polypeptide reads, in one-letter code: Acyl-[acyl-carrier-protein]--UDP-N-acetylglucosamine O-acyltransferase (262 aa).

The protein belongs to the transferase hexapeptide repeat family. LpxA subfamily. As to quaternary structure, homotrimer.

Its subcellular location is the cytoplasm. The catalysed reaction is a (3R)-hydroxyacyl-[ACP] + UDP-N-acetyl-alpha-D-glucosamine = a UDP-3-O-[(3R)-3-hydroxyacyl]-N-acetyl-alpha-D-glucosamine + holo-[ACP]. It participates in glycolipid biosynthesis; lipid IV(A) biosynthesis; lipid IV(A) from (3R)-3-hydroxytetradecanoyl-[acyl-carrier-protein] and UDP-N-acetyl-alpha-D-glucosamine: step 1/6. Its function is as follows. Involved in the biosynthesis of lipid A, a phosphorylated glycolipid that anchors the lipopolysaccharide to the outer membrane of the cell. The chain is Acyl-[acyl-carrier-protein]--UDP-N-acetylglucosamine O-acyltransferase from Salmonella arizonae (strain ATCC BAA-731 / CDC346-86 / RSK2980).